Reading from the N-terminus, the 155-residue chain is Microsomal glutathione S-transferase 1 (155 aa).

At 3 to 9 (DLKQLMD) the chain is on the lumenal side. The chain crosses the membrane as a helical span at residues 10-33 (NEVLMAFTSYATIILAKMMFLSSA). The Cytoplasmic portion of the chain corresponds to 34-62 (TAFQRLTNKVFANPEDCAGFGKGENAKKF). Arg38 provides a ligand contact to glutathione. N6-acetyllysine is present on residues Lys42, Lys55, and Lys60. Residues 63 to 96 (LRTDEKVERVRRAHLNDLENIVPFLGIGLLYSLS) form a helical membrane-spanning segment. 4 residues coordinate glutathione: Arg73, Arg74, His76, and Glu81. Tyr93 bears the 3'-nitrotyrosine; in vitro mark. Topologically, residues 97–99 (GPD) are lumenal. The helical transmembrane segment at 100–123 (LSTALIHFRIFVGARIYHTIAYLT) threads the bilayer. Tyr121 contacts glutathione. The Cytoplasmic segment spans residues 124–128 (PLPQP). The chain crosses the membrane as a helical span at residues 129–148 (NRGLAFFVGYGVTLSMAYRL). The Lumenal portion of the chain corresponds to 149–155 (LRSRLYL).

The protein belongs to the MAPEG family. In terms of assembly, homotrimer; The trimer binds only one molecule of glutathione. Post-translationally, in vitro, peroxynitrite induces nitration at Tyr-93 which activates the enzyme. As to expression, highest in the liver, followed by kidney and testis and much lower in seminal vesicles, spleen, lung and brain.

The protein resides in the endoplasmic reticulum membrane. The protein localises to the mitochondrion outer membrane. It carries out the reaction RX + glutathione = an S-substituted glutathione + a halide anion + H(+). Its activity is regulated as follows. In vitro, can be activated by reagents that attack Cys-50 sulfhydryl, such as N-ethylmaleimide and via nitration of Tyr-93 by peroxynitrite. Conjugation of reduced glutathione to a wide number of exogenous and endogenous hydrophobic electrophiles. This Rattus norvegicus (Rat) protein is Microsomal glutathione S-transferase 1 (Mgst1).